Here is a 427-residue protein sequence, read N- to C-terminus: Serine--tRNA ligase (427 aa).

An L-serine-binding site is contributed by 231 to 233 (TAE). 262–264 (RSE) is a binding site for ATP. Glutamate 285 contributes to the L-serine binding site. 349 to 352 (EISS) provides a ligand contact to ATP. Position 385 (serine 385) interacts with L-serine.

This sequence belongs to the class-II aminoacyl-tRNA synthetase family. Type-1 seryl-tRNA synthetase subfamily. Homodimer. The tRNA molecule binds across the dimer.

Its subcellular location is the cytoplasm. It carries out the reaction tRNA(Ser) + L-serine + ATP = L-seryl-tRNA(Ser) + AMP + diphosphate + H(+). The catalysed reaction is tRNA(Sec) + L-serine + ATP = L-seryl-tRNA(Sec) + AMP + diphosphate + H(+). It participates in aminoacyl-tRNA biosynthesis; selenocysteinyl-tRNA(Sec) biosynthesis; L-seryl-tRNA(Sec) from L-serine and tRNA(Sec): step 1/1. In terms of biological role, catalyzes the attachment of serine to tRNA(Ser). Is also able to aminoacylate tRNA(Sec) with serine, to form the misacylated tRNA L-seryl-tRNA(Sec), which will be further converted into selenocysteinyl-tRNA(Sec). The sequence is that of Serine--tRNA ligase from Exiguobacterium sp. (strain ATCC BAA-1283 / AT1b).